The primary structure comprises 168 residues: NADH-ubiquinone oxidoreductase chain 6 (168 aa).

A run of 5 helical transmembrane segments spans residues 26–46 (LGLM…LIIF), 52–72 (LLFL…ISLI), 82–102 (VFAY…FVMK), 111–131 (SMSL…IMLY), and 134–154 (FFCY…VVKI).

Belongs to the complex I subunit 6 family.

The protein localises to the mitochondrion membrane. It catalyses the reaction a ubiquinone + NADH + 5 H(+)(in) = a ubiquinol + NAD(+) + 4 H(+)(out). In terms of biological role, core subunit of the mitochondrial membrane respiratory chain NADH dehydrogenase (Complex I) that is believed to belong to the minimal assembly required for catalysis. Complex I functions in the transfer of electrons from NADH to the respiratory chain. The immediate electron acceptor for the enzyme is believed to be ubiquinone. This Heterololigo bleekeri (Spear squid) protein is NADH-ubiquinone oxidoreductase chain 6 (ND6).